We begin with the raw amino-acid sequence, 511 residues long: Histidine ammonia-lyase (511 aa).

The segment at residues 142 to 144 is a cross-link (5-imidazolinone (Ala-Gly)); the sequence is ASG. A 2,3-didehydroalanine (Ser) modification is found at Ser-143.

This sequence belongs to the PAL/histidase family. Post-translationally, contains an active site 4-methylidene-imidazol-5-one (MIO), which is formed autocatalytically by cyclization and dehydration of residues Ala-Ser-Gly.

The protein resides in the cytoplasm. The catalysed reaction is L-histidine = trans-urocanate + NH4(+). The protein operates within amino-acid degradation; L-histidine degradation into L-glutamate; N-formimidoyl-L-glutamate from L-histidine: step 1/3. The polypeptide is Histidine ammonia-lyase (Brucella ovis (strain ATCC 25840 / 63/290 / NCTC 10512)).